The chain runs to 533 residues: Tyrosine/DOPA decarboxylase 3 (533 aa).

Lys319 is subject to N6-(pyridoxal phosphate)lysine.

The protein belongs to the group II decarboxylase family. Homodimer. Pyridoxal 5'-phosphate serves as cofactor. As to expression, roots.

The enzyme catalyses L-tyrosine + H(+) = tyramine + CO2. The catalysed reaction is L-dopa + H(+) = dopamine + CO2. It catalyses the reaction 5-hydroxy-L-tryptophan + H(+) = serotonin + CO2. In terms of biological role, marginally higher substrate specificity for L-DOPA over L-tyrosine. The protein is Tyrosine/DOPA decarboxylase 3 (TYDC3) of Papaver somniferum (Opium poppy).